Reading from the N-terminus, the 125-residue chain is Ribonuclease P protein component (125 aa).

It belongs to the RnpA family. Consists of a catalytic RNA component (M1 or rnpB) and a protein subunit.

The catalysed reaction is Endonucleolytic cleavage of RNA, removing 5'-extranucleotides from tRNA precursor.. RNaseP catalyzes the removal of the 5'-leader sequence from pre-tRNA to produce the mature 5'-terminus. It can also cleave other RNA substrates such as 4.5S RNA. The protein component plays an auxiliary but essential role in vivo by binding to the 5'-leader sequence and broadening the substrate specificity of the ribozyme. In Idiomarina loihiensis (strain ATCC BAA-735 / DSM 15497 / L2-TR), this protein is Ribonuclease P protein component.